The chain runs to 152 residues: Small ribosomal subunit protein uS8m (152 aa).

The protein belongs to the universal ribosomal protein uS8 family.

It is found in the mitochondrion. The sequence is that of Small ribosomal subunit protein uS8m (mrps8) from Dictyostelium discoideum (Social amoeba).